Consider the following 1097-residue polypeptide: DNA-directed RNA polymerase subunit beta (1097 aa).

The disordered stretch occupies residues 1072 to 1097 (QDVNPRRSTPSRPTYESLGVADYDED).

Belongs to the RNA polymerase beta chain family. In cyanobacteria the RNAP catalytic core is composed of 2 alpha, 1 beta, 1 beta', 1 gamma and 1 omega subunit. When a sigma factor is associated with the core the holoenzyme is formed, which can initiate transcription.

The catalysed reaction is RNA(n) + a ribonucleoside 5'-triphosphate = RNA(n+1) + diphosphate. Functionally, DNA-dependent RNA polymerase catalyzes the transcription of DNA into RNA using the four ribonucleoside triphosphates as substrates. This chain is DNA-directed RNA polymerase subunit beta, found in Synechococcus sp. (strain CC9605).